The primary structure comprises 306 residues: Phosphoadenosine phosphosulfate reductase (306 aa).

2 disordered regions span residues 1–30 (MPAK…VSGG) and 245–266 (YHST…KGQA).

Belongs to the PAPS reductase family. CysH subfamily.

The catalysed reaction is [thioredoxin]-disulfide + sulfite + adenosine 3',5'-bisphosphate + 2 H(+) = [thioredoxin]-dithiol + 3'-phosphoadenylyl sulfate. It participates in sulfur metabolism; hydrogen sulfide biosynthesis; sulfite from sulfate: step 3/3. Its function is as follows. The NADP dependent reduction of PAPS into sulfite involves thioredoxin which probably plays the role of a thiol carrier. The sequence is that of Phosphoadenosine phosphosulfate reductase (sA) from Emericella nidulans (strain FGSC A4 / ATCC 38163 / CBS 112.46 / NRRL 194 / M139) (Aspergillus nidulans).